The chain runs to 115 residues: Toxin-like structure LSTX-D2 (115 aa).

Positions 1–22 (MKVLVLFSVLFLTLFSYSSTEA) are cleaved as a signal peptide. A propeptide spanning residues 23–44 (IDEFDSDAEDDMLSLMANEQVR) is cleaved from the precursor. Disulfide bonds link Cys-48-Cys-63, Cys-55-Cys-72, Cys-62-Cys-87, and Cys-74-Cys-85.

It belongs to the neurotoxin 19 (CSTX) family. 01 subfamily. Expressed by the venom gland.

The protein localises to the secreted. The polypeptide is Toxin-like structure LSTX-D2 (Lycosa singoriensis (Wolf spider)).